The primary structure comprises 357 residues: Guanine nucleotide-binding protein alpha-1 subunit (357 aa).

G2 is lipidated: N-myristoyl glycine. Residue C4 is the site of S-palmitoyl cysteine attachment. A G-alpha domain is found at 32 to 357; it reads NVIKLLLLGA…SSKLKGCGLF (326 aa). The tract at residues 35 to 48 is G1 motif; that stretch reads KLLLLGAGESGKST. Residues E43, S44, G45, K46, S47, T48, D151, L176, T182, G204, N270, K271, D273, and A329 each contribute to the GTP site. Mg(2+) is bound at residue S47. The interval 174-182 is G2 motif; sequence DILHTRVPT. Position 182 (T182) interacts with Mg(2+). Residues 197–206 are G3 motif; the sequence is FRVFDVGGQR. Residues 266–273 form a G4 motif region; that stretch reads ILFLNKVD. The G5 motif stretch occupies residues 327–332; the sequence is TCATDT.

This sequence belongs to the G-alpha family. G(q) subfamily. In terms of assembly, g proteins are composed of 3 units; alpha, beta and gamma. The alpha chain contains the guanine nucleotide binding site. Requires Mg(2+) as cofactor.

Guanine nucleotide-binding proteins (G proteins) are involved as modulators or transducers in various transmembrane signaling systems. The protein is Guanine nucleotide-binding protein alpha-1 subunit (gpa-1) of Caenorhabditis briggsae.